We begin with the raw amino-acid sequence, 513 residues long: GMP synthase [glutamine-hydrolyzing] (513 aa).

Positions 3-200 (SVLVLDFGSQ…LINIAGIRPD (198 aa)) constitute a Glutamine amidotransferase type-1 domain. Catalysis depends on C80, which acts as the Nucleophile. Catalysis depends on residues H174 and E176. The 188-residue stretch at 201–388 (WSSKSFIEHQ…LGIPEDILMR (188 aa)) folds into the GMPS ATP-PPase domain. Position 228–234 (228–234 (SGGVDST)) interacts with ATP.

In terms of assembly, homodimer.

It carries out the reaction XMP + L-glutamine + ATP + H2O = GMP + L-glutamate + AMP + diphosphate + 2 H(+). It participates in purine metabolism; GMP biosynthesis; GMP from XMP (L-Gln route): step 1/1. In terms of biological role, catalyzes the synthesis of GMP from XMP. The sequence is that of GMP synthase [glutamine-hydrolyzing] from Chlorobium luteolum (strain DSM 273 / BCRC 81028 / 2530) (Pelodictyon luteolum).